Here is a 458-residue protein sequence, read N- to C-terminus: Mitochondrial distribution and morphology protein 10 (458 aa).

The tract at residues 307–339 (LDQRRTEPLDAPNTNSSVFSKERVQKKQGPKED) is disordered. Positions 326–339 (SKERVQKKQGPKED) are enriched in basic and acidic residues.

This sequence belongs to the MDM10 family. In terms of assembly, component of the ER-mitochondria encounter structure (ERMES) or MDM complex, composed of MMM1, MDM10, MDM12 and MDM34. Associates with the mitochondrial outer membrane sorting assembly machinery SAM(core) complex.

It localises to the mitochondrion outer membrane. In terms of biological role, component of the ERMES/MDM complex, which serves as a molecular tether to connect the endoplasmic reticulum and mitochondria. Components of this complex are involved in the control of mitochondrial shape and protein biogenesis and may function in phospholipid exchange. MDM10 is involved in the late assembly steps of the general translocase of the mitochondrial outer membrane (TOM complex). Functions in the TOM40-specific route of the assembly of outer membrane beta-barrel proteins, including the association of TOM40 with the receptor TOM22 and small TOM proteins. Can associate with the SAM(core) complex as well as the MDM12-MMM1 complex, both involved in late steps of the major beta-barrel assembly pathway, that is responsible for biogenesis of all outer membrane beta-barrel proteins. May act as a switch that shuttles between both complexes and channels precursor proteins into the TOM40-specific pathway. Plays a role in mitochondrial morphology and in the inheritance of mitochondria. In Lachancea thermotolerans (strain ATCC 56472 / CBS 6340 / NRRL Y-8284) (Yeast), this protein is Mitochondrial distribution and morphology protein 10.